The primary structure comprises 114 residues: Early 4 ORF4 protein (114 aa).

The Nuclear localization signal motif lies at 66–75; sequence RAKRRDRRRR.

Belongs to the adenoviridae E4 ORF4 family. As to quaternary structure, interacts with host BAZ1A/ACF1, host PPP2R2A/PP2a-B55alpha subunit, and host PPP2R5E/PP2a-B'B56 subunit. May interact with host SRC. Post-translationally, may be phosphorylated by host SRC kinase.

It is found in the host nucleus. The protein resides in the host cytoplasm. In terms of biological role, plays a role in viral alternative pre-mRNA splicing. Activates dephosphorylation by protein phosphatase 2A of host SR proteins and converts their splicing properties. When expressed alone ex vivo, induces p53/TP53-independent apoptosis called cytoplasmic death. May mimic nutrient/growth signals to activate the host mTOR pathway. This Homo sapiens (Human) protein is Early 4 ORF4 protein.